Consider the following 144-residue polypeptide: Leghemoglobin-1 (144 aa).

Residues 2 to 144 (GFTEKQEALV…DGLATAIKAA (143 aa)) enclose the Globin domain. Y25 and Y30 each carry nitrated tyrosine. A heme b-binding site is contributed by S45. S45 carries the post-translational modification Phosphoserine. An O2-binding site is contributed by H62. Residues K65, H93, and K96 each contribute to the heme b site. The residue at position 134 (Y134) is a Nitrated tyrosine.

The protein belongs to the plant globin family. As to quaternary structure, monomer. Nitrated in effective nodules and particularly in hypoxic conditions; this mechanism may play a protective role in the symbiosis by buffering toxic peroxynitrite NO(2)(-). Nitration level decrease during nodule senescence. In terms of processing, phosphorylation at Ser-45 disrupts the molecular environment of its porphyrin ring oxygen binding pocket, thus leading to a reduced oxygen consumption and to the delivery of oxygen O(2) to symbiosomes. As to expression, root nodules.

The protein resides in the cytoplasm. Its subcellular location is the cytosol. It is found in the nucleus. Functionally, leghemoglobin that reversibly binds oxygen O(2) through a pentacoordinated heme iron. In root nodules, facilitates the diffusion of oxygen to the bacteroids while preventing the bacterial nitrogenase from being inactivated by buffering dioxygen, nitric oxide and carbon monoxide, and promoting the formation of reactive oxygen species (ROS, e.g. H(2)O(2)). This role is essential for symbiotic nitrogen fixation (SNF). The polypeptide is Leghemoglobin-1 (Vicia faba (Broad bean)).